The chain runs to 164 residues: Transcription antitermination protein NusB (164 aa).

It belongs to the NusB family.

In terms of biological role, involved in transcription antitermination. Required for transcription of ribosomal RNA (rRNA) genes. Binds specifically to the boxA antiterminator sequence of the ribosomal RNA (rrn) operons. The chain is Transcription antitermination protein NusB from Chlamydia muridarum (strain MoPn / Nigg).